Consider the following 475-residue polypeptide: SAM50-like protein SPAC17C9.06 (475 aa).

A POTRA domain is found at 44–130; that stretch reads VGISSIRVTG…LDVTIQVKEK (87 aa).

This sequence belongs to the SAM50/omp85 family. In terms of assembly, associates with the mitochondrial contact site and cristae organizing system (MICOS) complex (also known as MINOS or MitOS complex).

It is found in the mitochondrion outer membrane. In terms of biological role, may be required for the assembly pathway of mitochondrial outer membrane proteins. The polypeptide is SAM50-like protein SPAC17C9.06 (Schizosaccharomyces pombe (strain 972 / ATCC 24843) (Fission yeast)).